The chain runs to 157 residues: MLELDLQRATDAAAPDDAAFRRWCELALRQRTADSEMTIRLVDEAEGRELNHTYRHKDYATNVLSFPADVPDDLLDIPLLGDLVICVPVVEREAREQGKALEAHWAHLVIHGCLHLLGYDHIEDDEAEEMEALERELLAELGHPDPYADDETDSITH.

Zn(2+) contacts are provided by H111, H115, and H121.

The protein belongs to the endoribonuclease YbeY family. Zn(2+) is required as a cofactor.

The protein resides in the cytoplasm. Its function is as follows. Single strand-specific metallo-endoribonuclease involved in late-stage 70S ribosome quality control and in maturation of the 3' terminus of the 16S rRNA. In Pseudomonas entomophila (strain L48), this protein is Endoribonuclease YbeY.